Reading from the N-terminus, the 161-residue chain is Ribonuclease H (161 aa).

Residues 1–142 enclose the RNase H type-1 domain; sequence MLKLVKMFSD…CDKIARQSAQ (142 aa). 4 residues coordinate Mg(2+): aspartate 10, glutamate 48, aspartate 70, and aspartate 134.

It belongs to the RNase H family. In terms of assembly, monomer. The cofactor is Mg(2+).

The protein resides in the cytoplasm. The catalysed reaction is Endonucleolytic cleavage to 5'-phosphomonoester.. Endonuclease that specifically degrades the RNA of RNA-DNA hybrids. This is Ribonuclease H (rnhA) from Buchnera aphidicola subsp. Schizaphis graminum (strain Sg).